A 120-amino-acid chain; its full sequence is Seripauperin-13 (120 aa).

The signal sequence occupies residues 1–25 (MVKLTSIAAGVAAIAATASATTTLA).

This sequence belongs to the SRP1/TIP1 family. Seripauperin subfamily.

This Saccharomyces cerevisiae (strain ATCC 204508 / S288c) (Baker's yeast) protein is Seripauperin-13 (PAU13).